Consider the following 247-residue polypeptide: Carboxy-S-adenosyl-L-methionine synthase (247 aa).

S-adenosyl-L-methionine-binding positions include Tyr39, 64–66 (GCS), 117–118 (DI), Asn132, and Arg199.

The protein belongs to the class I-like SAM-binding methyltransferase superfamily. Cx-SAM synthase family. Homodimer.

The catalysed reaction is prephenate + S-adenosyl-L-methionine = carboxy-S-adenosyl-L-methionine + 3-phenylpyruvate + H2O. In terms of biological role, catalyzes the conversion of S-adenosyl-L-methionine (SAM) to carboxy-S-adenosyl-L-methionine (Cx-SAM). The sequence is that of Carboxy-S-adenosyl-L-methionine synthase from Aeromonas salmonicida (strain A449).